The primary structure comprises 267 residues: tRNA-cytidine(32) 2-sulfurtransferase 1 (267 aa).

A PP-loop motif motif is present at residues 42 to 47 (SGGKDS). [4Fe-4S] cluster contacts are provided by Cys-117, Cys-120, and Cys-208.

It belongs to the TtcA family. As to quaternary structure, homodimer. Mg(2+) is required as a cofactor. Requires [4Fe-4S] cluster as cofactor.

It localises to the cytoplasm. It carries out the reaction cytidine(32) in tRNA + S-sulfanyl-L-cysteinyl-[cysteine desulfurase] + AH2 + ATP = 2-thiocytidine(32) in tRNA + L-cysteinyl-[cysteine desulfurase] + A + AMP + diphosphate + H(+). The protein operates within tRNA modification. Catalyzes the ATP-dependent 2-thiolation of cytidine in position 32 of tRNA, to form 2-thiocytidine (s(2)C32). The sulfur atoms are provided by the cysteine/cysteine desulfurase (IscS) system. The sequence is that of tRNA-cytidine(32) 2-sulfurtransferase 1 from Francisella tularensis subsp. novicida (strain U112).